The following is a 342-amino-acid chain: Muscleblind-like protein 3 (342 aa).

4 consecutive C3H1-type zinc fingers follow at residues 14-42 (WLTL…HPPR), 48-74 (NGRV…HPPP), 174-202 (TDRL…HPTD), and 210-236 (DNSV…HPPP). A compositionally biased stretch (low complexity) spans 316–326 (PSTVSTATPPA). A disordered region spans residues 316 to 342 (PSTVSTATPPASNVPYVPTTTGNQLKY). Over residues 333-342 (PTTTGNQLKY) the composition is skewed to polar residues.

It belongs to the muscleblind family.

It localises to the nucleus. The protein resides in the cytoplasm. In terms of biological role, mediates pre-mRNA alternative splicing regulation. Acts either as activator or repressor of splicing on specific pre-mRNA targets. Inhibits cardiac troponin-T (TNNT2) pre-mRNA exon inclusion but induces insulin receptor (IR) pre-mRNA exon inclusion in muscle. Antagonizes the alternative splicing activity pattern of CELF proteins. Could inhibit terminal muscle differentiation, acting at approximately the time of myogenin induction. The protein is Muscleblind-like protein 3 (Mbnl3) of Mus musculus (Mouse).